We begin with the raw amino-acid sequence, 78 residues long: DNA-directed RNA polymerase subunit omega (78 aa).

It belongs to the RNA polymerase subunit omega family. In cyanobacteria the RNAP catalytic core is composed of 2 alpha, 1 beta, 1 beta', 1 gamma and 1 omega subunit. When a sigma factor is associated with the core the holoenzyme is formed, which can initiate transcription.

The enzyme catalyses RNA(n) + a ribonucleoside 5'-triphosphate = RNA(n+1) + diphosphate. In terms of biological role, promotes RNA polymerase assembly. Latches the N- and C-terminal regions of the beta' subunit thereby facilitating its interaction with the beta and alpha subunits. The polypeptide is DNA-directed RNA polymerase subunit omega (Trichormus variabilis (strain ATCC 29413 / PCC 7937) (Anabaena variabilis)).